A 177-amino-acid polypeptide reads, in one-letter code: ATP-dependent protease subunit HslV (177 aa).

The active site involves Thr-6. Ala-162, Cys-165, and Thr-168 together coordinate Na(+).

The protein belongs to the peptidase T1B family. HslV subfamily. A double ring-shaped homohexamer of HslV is capped on each side by a ring-shaped HslU homohexamer. The assembly of the HslU/HslV complex is dependent on binding of ATP.

The protein resides in the cytoplasm. The catalysed reaction is ATP-dependent cleavage of peptide bonds with broad specificity.. Its activity is regulated as follows. Allosterically activated by HslU binding. Functionally, protease subunit of a proteasome-like degradation complex believed to be a general protein degrading machinery. In Lawsonia intracellularis (strain PHE/MN1-00), this protein is ATP-dependent protease subunit HslV.